The primary structure comprises 300 residues: Formylmethanofuran--tetrahydromethanopterin formyltransferase-like protein (300 aa).

Belongs to the FTR family.

This is Formylmethanofuran--tetrahydromethanopterin formyltransferase-like protein from Methanopyrus kandleri (strain AV19 / DSM 6324 / JCM 9639 / NBRC 100938).